The primary structure comprises 56 residues: Large ribosomal subunit protein bL33 (56 aa).

This sequence belongs to the bacterial ribosomal protein bL33 family.

The protein is Large ribosomal subunit protein bL33 of Tropheryma whipplei (strain TW08/27) (Whipple's bacillus).